A 273-amino-acid polypeptide reads, in one-letter code: Galactose-binding lectin (273 aa).

The first 23 residues, 1–23 (MKPFCVFLTFFLLLAASSKKVDS), serve as a signal peptide directing secretion. Residues glutamate 144 and aspartate 146 each contribute to the Mn(2+) site. Aspartate 146, tyrosine 148, asparagine 150, and aspartate 155 together coordinate Ca(2+). Residues aspartate 155 and histidine 160 each contribute to the Mn(2+) site.

This sequence belongs to the leguminous lectin family. Homotetramer.

In terms of biological role, D-galactose specific lectin. The sequence is that of Galactose-binding lectin from Arachis hypogaea (Peanut).